The sequence spans 928 residues: MEQSGHEPGKNTFLSRVFGLQSDDVSTSIHTQELSTIPLDEDESNHGALVESEDDEDHNDGVRLLESDPGTSTQDSLESDTSEEDERINGINSDSQVIDTSRPLLSKKETMELHPFGSQNGRIMESSIKLGQPSSDEEDLINVNESLQPDLENRINPIYHEDKLDKALGNSSKNIRTSTFLDRVLKPNDVKKNSTKKRQNSHNYNPTSTYTNSSSNTFLNTVKGEKSSKKYKLKRPNILNALSVVNNMPERRLNTLSPKERALWKWANVDNLDLFLQDAYNYYLGNGFHCIILQKVLNILTLLFVVFVSSFMGYCVDYSKLPTSTRFSEIKIDHCYSQNITGFTKFLLFLFYGFVILKVIQLYFDINNIREMKLFYHYLLNISDDELQTIPWQNIIQQLMYLKDQNALTANVVAVKAKNKLNAHGIANRIMRKENYLIALYNNDILDLRFPIPFFGSQPLTKTLEWNINLCVMGYVFNEAGFIKQGFLKATQKEYFANELRKRFMLAGFLNIILSPFLVSYFVLLYFFRYFNEYKTSPENIGARQYTPMAEWKFREYNELYHIFRKRIGLSNPLASKYVDQFPKEKTNILLKFVSFISGSFVAILAILALWDPENFLNFEVTHDKTVLFYITVLGAIWSISQGSVSTEYHVFDPEETLRELAEYTHYLPDSWKDRYHTEGVKQEFCELYNLRITVLLRELASLITTPFILWFSLPNSAGKMVDFFRESSVYVDGLGYVCKYAVYDGDADAVKKHFGTDGNETTEQDAATEEQDIDSEPDEATKKMMQSYMYFLDDYENDDNLLGKYQIPKKRRESFDNTQYDVSNSNQKNQDDDSDMILANRYTWRKQFKPGQKPELFRIGNHVLNDKTFTQQGSNHLGIDESYARSQISNTAEESNRSSLYNSKYKSPTKGVLGLVKEYYKKSDVGR.

The Cytoplasmic segment spans residues 1–295 (MEQSGHEPGK…NGFHCIILQK (295 aa)). Disordered stretches follow at residues 28 to 118 (SIHT…PFGS) and 188 to 216 (NDVK…SSSN). Residues 77–86 (LESDTSEEDE) are compositionally biased toward acidic residues. Positions 90–99 (GINSDSQVID) are enriched in polar residues. The segment covering 201–216 (SHNYNPTSTYTNSSSN) has biased composition (low complexity). A helical transmembrane segment spans residues 296 to 316 (VLNILTLLFVVFVSSFMGYCV). Over 317–345 (DYSKLPTSTRFSEIKIDHCYSQNITGFTK) the chain is Lumenal. Residue Asn339 is glycosylated (N-linked (GlcNAc...) asparagine). Residues 346–366 (FLLFLFYGFVILKVIQLYFDI) form a helical membrane-spanning segment. The Cytoplasmic portion of the chain corresponds to 367 to 507 (NNIREMKLFY…NELRKRFMLA (141 aa)). Residues 508-528 (GFLNIILSPFLVSYFVLLYFF) lie within the membrane without spanning it. The Cytoplasmic portion of the chain corresponds to 529–588 (RYFNEYKTSPENIGARQYTPMAEWKFREYNELYHIFRKRIGLSNPLASKYVDQFPKEKTN). A helical transmembrane segment spans residues 589–609 (ILLKFVSFISGSFVAILAILA). The Lumenal segment spans residues 610-625 (LWDPENFLNFEVTHDK). A helical transmembrane segment spans residues 626–646 (TVLFYITVLGAIWSISQGSVS). Over 647-692 (TEYHVFDPEETLRELAEYTHYLPDSWKDRYHTEGVKQEFCELYNLR) the chain is Cytoplasmic. Residues 693 to 713 (ITVLLRELASLITTPFILWFS) lie within the membrane without spanning it. Residues 714 to 928 (LPNSAGKMVD…EYYKKSDVGR (215 aa)) are Cytoplasmic-facing. The interval 755-779 (FGTDGNETTEQDAATEEQDIDSEPD) is disordered. Positions 761–779 (ETTEQDAATEEQDIDSEPD) are enriched in acidic residues.

Belongs to the ATG9 family. In terms of assembly, homotrimer; forms a homotrimer with a central pore that forms a path between the two membrane leaflets. Phosphorylated by ATG1. ATG1 phosphorylation is required for preautophagosome elongation.

The protein localises to the preautophagosomal structure membrane. It is found in the cytoplasmic vesicle membrane. Its subcellular location is the golgi apparatus membrane. It localises to the endoplasmic reticulum membrane. The catalysed reaction is a 1,2-diacyl-sn-glycero-3-phosphocholine(in) = a 1,2-diacyl-sn-glycero-3-phosphocholine(out). The enzyme catalyses a 1,2-diacyl-sn-glycero-3-phospho-L-serine(in) = a 1,2-diacyl-sn-glycero-3-phospho-L-serine(out). It carries out the reaction a 1,2-diacyl-sn-glycero-3-phosphoethanolamine(in) = a 1,2-diacyl-sn-glycero-3-phosphoethanolamine(out). It catalyses the reaction a 1,2-diacyl-sn-glycero-3-phospho-(1D-myo-inositol-3-phosphate)(in) = a 1,2-diacyl-sn-glycero-3-phospho-(1D-myo-inositol-3-phosphate)(out). Functionally, phospholipid scramblase involved in autophagy and cytoplasm to vacuole transport (Cvt) vesicle formation. Cycles between the preautophagosomal structure/phagophore assembly site (PAS) and the cytoplasmic vesicle pool and supplies membrane for the growing autophagosome. Lipid scramblase activity plays a key role in preautophagosomal structure/phagophore assembly by distributing the phospholipids that arrive through ATG2 from the cytoplasmic to the luminal leaflet of the bilayer, thereby driving autophagosomal membrane expansion. Required for mitophagy. Also involved in endoplasmic reticulum-specific autophagic process and is essential for the survival of cells subjected to severe ER stress. Different machineries are required for anterograde trafficking to the PAS during either the Cvt pathway or bulk autophagy and for retrograde trafficking. The sequence is that of Autophagy-related protein 9 (ATG9) from Candida glabrata (strain ATCC 2001 / BCRC 20586 / JCM 3761 / NBRC 0622 / NRRL Y-65 / CBS 138) (Yeast).